A 150-amino-acid polypeptide reads, in one-letter code: Large ribosomal subunit protein bL9 (150 aa).

Belongs to the bacterial ribosomal protein bL9 family.

Its function is as follows. Binds to the 23S rRNA. This Acidovorax ebreus (strain TPSY) (Diaphorobacter sp. (strain TPSY)) protein is Large ribosomal subunit protein bL9.